We begin with the raw amino-acid sequence, 146 residues long: Large ribosomal subunit protein uL15 (146 aa).

Residues 1 to 13 show a composition bias toward basic and acidic residues; sequence MKLHELKPAEGSR. Residues 1–56 form a disordered region; sequence MKLHELKPAEGSRKVRNRVGRGAATGNGKTSGRGQKGQKARSGGSVRPGFEGGQLP. A compositionally biased stretch (gly residues) spans 23–35; it reads AATGNGKTSGRGQ.

The protein belongs to the universal ribosomal protein uL15 family. As to quaternary structure, part of the 50S ribosomal subunit.

Its function is as follows. Binds to the 23S rRNA. This Staphylococcus saprophyticus subsp. saprophyticus (strain ATCC 15305 / DSM 20229 / NCIMB 8711 / NCTC 7292 / S-41) protein is Large ribosomal subunit protein uL15.